Consider the following 432-residue polypeptide: Glutamate-1-semialdehyde 2,1-aminomutase (432 aa).

K269 is subject to N6-(pyridoxal phosphate)lysine.

It belongs to the class-III pyridoxal-phosphate-dependent aminotransferase family. HemL subfamily. In terms of assembly, homodimer. The cofactor is pyridoxal 5'-phosphate.

The protein resides in the cytoplasm. The catalysed reaction is (S)-4-amino-5-oxopentanoate = 5-aminolevulinate. The protein operates within porphyrin-containing compound metabolism; protoporphyrin-IX biosynthesis; 5-aminolevulinate from L-glutamyl-tRNA(Glu): step 2/2. This is Glutamate-1-semialdehyde 2,1-aminomutase from Desulforamulus reducens (strain ATCC BAA-1160 / DSM 100696 / MI-1) (Desulfotomaculum reducens).